Reading from the N-terminus, the 153-residue chain is ORM1-like protein 1 (153 aa).

Over Met1 to Tyr26 the chain is Cytoplasmic. The next 2 membrane-spanning stretches (helical) occupy residues Ala27 to Pro46 and Val47 to Leu64. The Cytoplasmic portion of the chain corresponds to His65–Lys100. A helical membrane pass occupies residues Phe101 to Thr121. The Extracellular portion of the chain corresponds to Thr122–His123. Residues Phe124–Pro140 traverse the membrane as a helical segment. The Cytoplasmic segment spans residues Gln141–Tyr153.

The protein belongs to the ORM family. Ceramide-sensitive subunit of the serine palmitoyltransferase (SPT) complex, which is also composed of SPTLC1, SPTLC2/3 and SPTSSA/B.

The protein localises to the endoplasmic reticulum membrane. In terms of biological role, plays an essential role in the homeostatic regulation of sphingolipid de novo biosynthesis by modulating the activity of the serine palmitoyltransferase (SPT) in response to ceramide levels. When complexed to SPT, the binding of ceramides to its N-terminus stabilizes a conformation that block SPT substrate entry, hence preventing SPT catalytic activity. Through this mechanism, maintains ceramide levels at sufficient concentrations for the production of complex sphingolipids, but which prevents the accumulation of ceramides to levels that trigger apoptosis. The chain is ORM1-like protein 1 (ORMDL1) from Bos taurus (Bovine).